Here is a 57-residue protein sequence, read N- to C-terminus: Protein new-glue 4 (57 aa).

Positions 1 to 16 are cleaved as a signal peptide; that stretch reads MEWKLLLIVLPWLLVC.

Its subcellular location is the secreted. The chain is Protein new-glue 4 (ng4) from Drosophila melanogaster (Fruit fly).